Here is a 447-residue protein sequence, read N- to C-terminus: N-succinylarginine dihydrolase (447 aa).

Substrate contacts are provided by residues 19–28 (AGLSFGNVAS), N110, and 137–138 (HR). E174 is a catalytic residue. R214 provides a ligand contact to substrate. H250 is a catalytic residue. Residues D252 and N364 each coordinate substrate. C370 serves as the catalytic Nucleophile.

Belongs to the succinylarginine dihydrolase family. In terms of assembly, homodimer.

The catalysed reaction is N(2)-succinyl-L-arginine + 2 H2O + 2 H(+) = N(2)-succinyl-L-ornithine + 2 NH4(+) + CO2. It participates in amino-acid degradation; L-arginine degradation via AST pathway; L-glutamate and succinate from L-arginine: step 2/5. In terms of biological role, catalyzes the hydrolysis of N(2)-succinylarginine into N(2)-succinylornithine, ammonia and CO(2). This Idiomarina loihiensis (strain ATCC BAA-735 / DSM 15497 / L2-TR) protein is N-succinylarginine dihydrolase.